Reading from the N-terminus, the 471-residue chain is Proton-coupled amino acid transporter-like protein pathetic (471 aa).

A glycan (N-linked (GlcNAc...) asparagine) is linked at Asn61. 10 helical membrane passes run 81-101 (FAFMCSGLIMGIFSTIFTAFI), 153-173 (ILFGLFLTYFGTCSVYTVIVA), 187-207 (AVSLRMLICIMLVPLILIAWV), 216-236 (VSMVANVFMGLGLGITFYYLV), 253-273 (LPQFFSITIFAMEAIGVVMPL), 283-303 (FLGICGVLSQGMSGVTLIYML), 337-357 (LISLAVYCTFGLQFFVCLEII), 375-395 (VLRTVLVTAAVVLAVAVPTIG), 397-417 (FMGLIGAFCFSILGLIFPVVI), and 432-452 (WILWKNAIITLCGIGALVFGT).

This sequence belongs to the amino acid/polyamine transporter 2 family. As to expression, in third instar larvae, expressed at highest levels in the brain and digestive system with particularly high levels in surface glia of the brain (at protein level). In third instar larvae, expressed in all cells of the body wall (at protein level). Within the body wall of third instar larvae, most highly expressed in epithelial cells and sensory neurons. Expressed at a similar level in all da neurons (at protein level). Widely expressed during embryonic and late larval stages. Levels are highly dynamic in embryogenesis with surges of expression in many structures, including muscle primordia, salivary glands, proventriculus, trachea and gonads. Expressed in all or most cells of larval imaginal disks. Expression is also particularly strong in the pouch and hinge regions of the wing disk and in the morphogenetic furrow of the eye disk.

It is found in the cell membrane. It localises to the lysosome membrane. The protein resides in the late endosome membrane. The protein localises to the cell projection. Its subcellular location is the axon. It is found in the dendrite. It localises to the perikaryon. The protein resides in the cytoplasm. Functionally, amino acid transporter which has pH-dependent electrogenic transport activity for alanine and glycine but not for proline. Plays a role in positive regulation of growth by directly or indirectly modulating the effects of the TOR signaling pathway. Required in a cell-autonomous manner for dendrite growth in neurons with large dendrite arbors. The polypeptide is Proton-coupled amino acid transporter-like protein pathetic (Drosophila melanogaster (Fruit fly)).